We begin with the raw amino-acid sequence, 572 residues long: Mitochondrial distribution and morphology protein 34 (572 aa).

The SMP-LTD domain maps to 1 to 195 (MAFNFNWSPL…LPAIIHRLSL (195 aa)). 4 disordered regions span residues 212–236 (TASA…VDAL), 321–426 (VGSM…PDND), 477–522 (SATP…DNPT), and 553–572 (CGPF…AYGH). The span at 330–348 (SASMVSSQSRSSTPSHTFS) shows a compositional bias: low complexity. Over residues 358–370 (RHSKAHARKRKKR) the composition is skewed to basic residues. Positions 371 to 381 (VVDLRRPKTTD) are enriched in basic and acidic residues. Polar residues-rich tracts occupy residues 387 to 400 (SDES…SAPS) and 500 to 511 (DSSAGSSRQLPS).

This sequence belongs to the MDM34 family. Component of the ER-mitochondria encounter structure (ERMES) or MDM complex, composed of mmm1, mdm10, mdm12 and mdm34.

The protein localises to the mitochondrion outer membrane. Its function is as follows. Component of the ERMES/MDM complex, which serves as a molecular tether to connect the endoplasmic reticulum (ER) and mitochondria. Components of this complex are involved in the control of mitochondrial shape and protein biogenesis, and function in nonvesicular lipid trafficking between the ER and mitochondria. Mdm34 is required for the interaction of the ER-resident membrane protein mmm1 and the outer mitochondrial membrane-resident beta-barrel protein mdm10. The polypeptide is Mitochondrial distribution and morphology protein 34 (Aspergillus fumigatus (strain CBS 144.89 / FGSC A1163 / CEA10) (Neosartorya fumigata)).